The chain runs to 154 residues: Large ribosomal subunit protein uL13 (154 aa).

This sequence belongs to the universal ribosomal protein uL13 family. Part of the 50S ribosomal subunit.

Its function is as follows. This protein is one of the early assembly proteins of the 50S ribosomal subunit, although it is not seen to bind rRNA by itself. It is important during the early stages of 50S assembly. The chain is Large ribosomal subunit protein uL13 from Sinorhizobium medicae (strain WSM419) (Ensifer medicae).